Consider the following 652-residue polypeptide: Putative enzymatic polyprotein (652 aa).

The 79-residue stretch at 21 to 99 folds into the Peptidase A2 domain; sequence YHGLFDTGAN…SPDIIIGATF (79 aa). Residue D26 is part of the active site. The 183-residue stretch at 231–413 folds into the Reverse transcriptase domain; it reads FIEEKTNFED…EKIDFLGVQI (183 aa). Mg(2+) contacts are provided by D301, D364, and D365.

It catalyses the reaction DNA(n) + a 2'-deoxyribonucleoside 5'-triphosphate = DNA(n+1) + diphosphate. The enzyme catalyses Endonucleolytic cleavage to 5'-phosphomonoester.. In terms of biological role, encodes for at least two polypeptides: protease (PR) and reverse transcriptase (RT). The protease processes the polyprotein in cis. Reverse transcriptase is multifunctional enzyme that converts the viral RNA genome into dsDNA in viral cytoplasmic capsids. This enzyme displays a DNA polymerase activity that can copy either DNA or RNA templates, and a ribonuclease H (RNase H) activity that cleaves the RNA strand of RNA-DNA heteroduplexes in a partially processive 3'- to 5'-endonucleasic mode. Neo-synthesized pregenomic RNA (pgRNA) are encapsidated, and reverse-transcribed inside the nucleocapsid. Partial (+)DNA is synthesized from the (-)DNA template and generates the relaxed circular DNA (RC-DNA) genome. After budding and infection, the RC-DNA migrates in the nucleus, and is converted into a plasmid-like covalently closed circular DNA (cccDNA). This is Putative enzymatic polyprotein from Cassava vein mosaic virus (CsVMV).